Reading from the N-terminus, the 898-residue chain is Netrin receptor UNC5A (898 aa).

Positions 1 to 25 (MAVRPGLWPVLLGIVLAAWLRGSGA) are cleaved as a signal peptide. Over 26–361 (QQSATVANPV…TASCPEDVAL (336 aa)) the chain is Extracellular. Positions 44–141 (PHFLVEPEDV…SGTTKSQKAY (98 aa)) constitute an Ig-like domain. Cystine bridges form between C65–C126, C77–C124, and C170–C221. Residues N107 and N218 are each glycosylated (N-linked (GlcNAc...) asparagine). Positions 155–238 (PLAKEVSLEQ…RRRSTSAAVI (84 aa)) constitute an Ig-like C2-type domain. 2 consecutive TSP type-1 domains span residues 242 to 296 (NGGW…TLCP) and 298 to 350 (DGSW…DLCL). C-linked (Man) tryptophan glycosylation is found at W245, W248, and W251. 3 cysteine pairs are disulfide-bonded: C254/C291, C258/C295, and C269/C281. C-linked (Man) tryptophan glycans are attached at residues W301 and W304. 3 cysteine pairs are disulfide-bonded: C310/C344, C314/C349, and C322/C334. N343 carries an N-linked (GlcNAc...) asparagine glycan. Residues 362–382 (YIGLVAVAVCLFLLLLALGLI) form a helical membrane-spanning segment. Topologically, residues 383-898 (YCRKKEGLDS…GLFTVSEAEC (516 aa)) are cytoplasmic. A ZU5 domain is found at 497-640 (NMAYGTFNFL…LGRFALVGEA (144 aa)). Residues 661 to 679 (SLEYNIRVYCLHDTHDALK) are interaction with DCC. The Death domain occupies 817–897 (QKIIASLDPP…AGLFTVSEAE (81 aa)).

This sequence belongs to the unc-5 family. As to quaternary structure, homodimer and homooligomer. Interacts with the cytoplasmic part of DCC. Interacts with MAGED1. Interacts with PRKCABP, possibly mediating some interaction with PKC. Interacts (via extracellular domain) with FLRT2 (via extracellular domain). Interacts (via extracellular domain) with FLRT3 (via extracellular domain). Post-translationally, phosphorylated on cytoplasmic tyrosine residues. Phosphorylated by PKC in vitro. In terms of processing, proteolytically cleaved by caspases during apoptosis. The cleavage does not take place when the receptor is associated with netrin ligand. Its cleavage by caspases is required to induce apoptosis. The two extracellular TSRs of UNC5A contain WxxWxxWxxC motifs that can be C-mannosylated on all tryptophans. DPY19L1 preferentially mannosylates the first two tryptophans and DPY19L3 prefers the third. C-mannosylation by DPY19L1 is required for transport of UNC5A from the endoplasmic reticulum to the cell surface. In terms of tissue distribution, mainly expressed in regions of differentiating neurons. Expressed at early stages of neural tube development in the ventral spinal cord. In developing hindbrain, it colocalizes with a number of cranial motor neuron subpopulations from embryonic E11 to E14, while DCC is expressed by motor neurons at E12. Also expressed in non-neural structures, such as the basal plane of the hindbrain and midbrain, in the developing hypothalamus, thalamus and in the pallidum.

The protein localises to the cell membrane. Its subcellular location is the membrane raft. The protein resides in the cell projection. It localises to the neuron projection. Receptor for netrin required for axon guidance. Functions in the netrin signaling pathway and promotes neurite outgrowth in response to NTN1. Mediates axon repulsion of neuronal growth cones in the developing nervous system in response to netrin. Axon repulsion in growth cones may be mediated by its association with DCC that may trigger signaling for repulsion. It also acts as a dependence receptor required for apoptosis induction when not associated with netrin ligand. The chain is Netrin receptor UNC5A (Unc5a) from Rattus norvegicus (Rat).